The chain runs to 229 residues: Peptide methionine sulfoxide reductase B3, chloroplastic (229 aa).

Residues 1 to 71 constitute a chloroplast transit peptide; that stretch reads MGVQHLLKLR…NHNQWAASRC (71 aa). The MsrB domain occupies 102–223; that stretch reads EEEWEAILSP…NSISLKFIPA (122 aa). Cysteine 141, cysteine 144, cysteine 187, and cysteine 190 together coordinate Zn(2+). The cysteines at positions 159 and 212 are disulfide-linked. Catalysis depends on cysteine 212, which acts as the Nucleophile.

Belongs to the MsrB Met sulfoxide reductase family. It depends on Zn(2+) as a cofactor.

It localises to the plastid. The protein resides in the chloroplast. It catalyses the reaction L-methionyl-[protein] + [thioredoxin]-disulfide + H2O = L-methionyl-(R)-S-oxide-[protein] + [thioredoxin]-dithiol. Its function is as follows. Catalyzes the reduction of methionine sulfoxide (MetSO) to methionine in proteins. Plays a protective role against oxidative stress by restoring activity to proteins that have been inactivated by methionine oxidation. MSRB family specifically reduces the MetSO R-enantiomer. The sequence is that of Peptide methionine sulfoxide reductase B3, chloroplastic (MSRB3) from Oryza sativa subsp. japonica (Rice).